The chain runs to 161 residues: C-type lectin lectoxin-Lio3 (161 aa).

An N-terminal signal peptide occupies residues Met-1 to Ala-23. Intrachain disulfides connect Cys-27–Cys-38, Cys-55–Cys-154, and Cys-129–Cys-146. The C-type lectin domain occupies His-34–Gln-155. An N-linked (GlcNAc...) asparagine glycan is attached at Asn-35. The short motif at Lys-117–Glu-119 is the Mannose-binding element. 3 residues coordinate Ca(2+): Glu-127, Asn-142, and Asp-143.

It belongs to the true venom lectin family. As to expression, expressed by the venom gland.

The protein resides in the secreted. Its function is as follows. Mannose-binding lectin which recognizes specific carbohydrate structures and agglutinates a variety of animal cells by binding to cell-surface glycoproteins and glycolipids. May be a calcium-dependent lectin. This is C-type lectin lectoxin-Lio3 from Erythrolamprus poecilogyrus (Water snake).